Here is a 301-residue protein sequence, read N- to C-terminus: Fluoroquinolones export ATP-binding protein Rv2688c (301 aa).

An ABC transporter domain is found at 18 to 246 (IRVRGLTFRY…RSRRRVRVEY (229 aa)). 52–59 (GPSGAGKS) provides a ligand contact to ATP.

Belongs to the ABC transporter superfamily. As to quaternary structure, the complex is composed of 2 ATP-binding proteins (Rv2688c) and 2 transmembrane proteins (Rv2686c and Rv2687c).

It is found in the cell membrane. With respect to regulation, inhibited by reserpine and verapamil. Part of the ABC transporter complex Rv2686c/Rv2687c/Rv2688c involved in fluoroquinolones export. Confers resistance to ciprofloxacin and, to a lesser extent, norfloxacin, moxifloxacin and sparfloxacin. Probably responsible for energy coupling to the transport system. The sequence is that of Fluoroquinolones export ATP-binding protein Rv2688c from Mycobacterium tuberculosis (strain ATCC 25618 / H37Rv).